The following is a 274-amino-acid chain: Large ribosomal subunit protein uL2cz/uL2cy (274 aa).

2 disordered regions span residues 1 to 24 (MAIHLYKTSTPSTRNGTVDSQVKS) and 223 to 274 (MNPV…RRSK). A compositionally biased stretch (polar residues) spans 7–24 (KTSTPSTRNGTVDSQVKS).

It belongs to the universal ribosomal protein uL2 family. In terms of assembly, part of the 50S ribosomal subunit.

Its subcellular location is the plastid. It is found in the chloroplast. The polypeptide is Large ribosomal subunit protein uL2cz/uL2cy (rpl2-A) (Nicotiana sylvestris (Wood tobacco)).